A 939-amino-acid chain; its full sequence is Nonsense-mediated mRNA decay factor SMG8 (939 aa).

Disordered stretches follow at residues 561 to 600 (KICT…QLSP) and 617 to 645 (LNES…ADTE). Positions 567–587 (GEDENEDGETEEADEDTEEKE) are enriched in acidic residues. Residues 617 to 629 (LNESQESSEQLSG) are compositionally biased toward low complexity.

This sequence belongs to the SMG8 family.

Functionally, involved in nonsense-mediated decay (NMD) of mRNAs containing premature stop codons. Probable component of kinase complex containing nonC and recruited to stalled ribosomes. The chain is Nonsense-mediated mRNA decay factor SMG8 from Drosophila ananassae (Fruit fly).